Here is a 144-residue protein sequence, read N- to C-terminus: Maximins 6/H10 (144 aa).

Positions 1–18 are cleaved as a signal peptide; the sequence is MNFKYIVAVSFLIASAYA. Residues 19 to 43 constitute a propeptide that is removed on maturation; it reads RSVKNDEQSLSQRDVLDEESLREIR. Asparagine amide is present on N70. The propeptide occupies 74–123; the sequence is TAEDHEVMKRLEAVMRDLDSLDHPEEASERETRGFNQEEIANRFTKKEKR. Position 143 is a leucine amide (L143).

It belongs to the bombinin family. In terms of tissue distribution, expressed by the skin glands.

Its subcellular location is the secreted. In terms of biological role, maximin-6 shows antimicrobial activity against bacteria and against the fungus C.albicans. It has little hemolytic activity. Its function is as follows. Maximin-H10 shows antimicrobial activity against bacteria and against the fungus C.albicans. Shows strong hemolytic activity. The sequence is that of Maximins 6/H10 from Bombina maxima (Giant fire-bellied toad).